Reading from the N-terminus, the 273-residue chain is Glucosamine-6-phosphate deaminase (273 aa).

D72 functions as the Proton acceptor; for enolization step in the catalytic mechanism. D141 (for ring-opening step) is an active-site residue. The active-site Proton acceptor; for ring-opening step is H143. E148 (for ring-opening step) is an active-site residue.

The protein belongs to the glucosamine/galactosamine-6-phosphate isomerase family. Homohexamer.

It is found in the cytoplasm. It catalyses the reaction alpha-D-glucosamine 6-phosphate + H2O = beta-D-fructose 6-phosphate + NH4(+). It participates in nucleotide-sugar biosynthesis; UDP-N-acetyl-alpha-D-glucosamine biosynthesis; alpha-D-glucosamine 6-phosphate from D-fructose 6-phosphate: step 1/1. Its function is as follows. Catalyzes the reversible conversion of alpha-D-glucosamine 6-phosphate (GlcN-6P) into beta-D-fructose 6-phosphate (Fru-6P) and ammonium ion, a regulatory reaction step in de novo uridine diphosphate-N-acetyl-alpha-D-glucosamine (UDP-GlcNAc) biosynthesis via hexosamine pathway. This is Glucosamine-6-phosphate deaminase from Drosophila melanogaster (Fruit fly).